We begin with the raw amino-acid sequence, 136 residues long: MQSDIYHPGHSFPSWVLCWVHSCGHEGHLRETAEIRKTHQNGDLQIRGGRGRRESTEIFQVASVTEGEESPPAICMEVFLFLWFIAPIYACVCRIFKIQVRNTVKNSSTASLAPSISTSEERQIRIERHHYHLYGQ.

The helical transmembrane segment at Ala73–Cys93 threads the bilayer.

The protein resides in the membrane. This chain is Gilles de la Tourette syndrome chromosomal region candidate gene 1 protein (GTSCR1), found in Homo sapiens (Human).